Reading from the N-terminus, the 259-residue chain is Imidazole glycerol phosphate synthase subunit HisF (259 aa).

Catalysis depends on residues Asp11 and Asp130.

The protein belongs to the HisA/HisF family. As to quaternary structure, heterodimer of HisH and HisF.

It localises to the cytoplasm. The catalysed reaction is 5-[(5-phospho-1-deoxy-D-ribulos-1-ylimino)methylamino]-1-(5-phospho-beta-D-ribosyl)imidazole-4-carboxamide + L-glutamine = D-erythro-1-(imidazol-4-yl)glycerol 3-phosphate + 5-amino-1-(5-phospho-beta-D-ribosyl)imidazole-4-carboxamide + L-glutamate + H(+). Its pathway is amino-acid biosynthesis; L-histidine biosynthesis; L-histidine from 5-phospho-alpha-D-ribose 1-diphosphate: step 5/9. Its function is as follows. IGPS catalyzes the conversion of PRFAR and glutamine to IGP, AICAR and glutamate. The HisF subunit catalyzes the cyclization activity that produces IGP and AICAR from PRFAR using the ammonia provided by the HisH subunit. In Solidesulfovibrio magneticus (strain ATCC 700980 / DSM 13731 / RS-1) (Desulfovibrio magneticus), this protein is Imidazole glycerol phosphate synthase subunit HisF.